The primary structure comprises 65 residues: Alpha-toxin Lqq4 (65 aa).

In terms of domain architecture, LCN-type CS-alpha/beta spans 3–65 (RDAYIADDKN…VPIRIPGKCR (63 aa)). Residues 9 to 13 (DDKNC) are specificity module, loop 1. Intrachain disulfides connect Cys-13-Cys-64, Cys-17-Cys-37, Cys-23-Cys-47, and Cys-27-Cys-49. 2 specificity module, loop regions span residues 40–44 (LGKYG) and 57–65 (PIRIPGKCR). Arginine amide is present on Arg-65.

The protein belongs to the long (4 C-C) scorpion toxin superfamily. Sodium channel inhibitor family. Alpha subfamily. The recombinant toxin which is used for activity tests is not amidated. However, C-terminal amidation does not appear to play an important role in activity, since the non-amidated recombinant toxin and the native toxin (which is amidated) show similar activities on all sodium channels tested. Expressed by the venom gland.

Its subcellular location is the secreted. Alpha toxins bind voltage-independently at site-3 of sodium channels (Nav) and inhibit the inactivation of the activated channels, thereby blocking neuronal transmission. Both native and recombinant (non-amidated) toxins inhibit inactivation of Nav1.2/SCN2A (EC(50)=31.2-36.6 nM), Nav1.6/SCN8A (EC(50)=6.9-8.9 nM), and Nav1.7/SCN9A (EC(50)=182.0-260.1 nM). The sequence is that of Alpha-toxin Lqq4 from Leiurus quinquestriatus quinquestriatus (Egyptian scorpion).